Here is a 73-residue protein sequence, read N- to C-terminus: UPF0154 protein MYCGA5700 (73 aa).

The chain crosses the membrane as a helical span at residues 5–25 (LALGLSIPLCLIVGAFVGYFV).

This sequence belongs to the UPF0154 family.

The protein localises to the membrane. In Mycoplasmoides gallisepticum (strain R(low / passage 15 / clone 2)) (Mycoplasma gallisepticum), this protein is UPF0154 protein MYCGA5700.